Consider the following 954-residue polypeptide: Valine--tRNA ligase (954 aa).

The 'HIGH' region signature appears at 48-58 (PNVTGSLHMGH). The short motif at 560–564 (KMSKS) is the 'KMSKS' region element. Lys-563 is a binding site for ATP. The stretch at 883-953 (AGFINKEAEL…LKQQYLAIEA (71 aa)) forms a coiled coil.

It belongs to the class-I aminoacyl-tRNA synthetase family. ValS type 1 subfamily. As to quaternary structure, monomer.

The protein resides in the cytoplasm. The catalysed reaction is tRNA(Val) + L-valine + ATP = L-valyl-tRNA(Val) + AMP + diphosphate. Functionally, catalyzes the attachment of valine to tRNA(Val). As ValRS can inadvertently accommodate and process structurally similar amino acids such as threonine, to avoid such errors, it has a 'posttransfer' editing activity that hydrolyzes mischarged Thr-tRNA(Val) in a tRNA-dependent manner. In Pasteurella multocida (strain Pm70), this protein is Valine--tRNA ligase.